A 122-amino-acid chain; its full sequence is Large ribosomal subunit protein uL14 (122 aa).

It belongs to the universal ribosomal protein uL14 family. In terms of assembly, part of the 50S ribosomal subunit. Forms a cluster with proteins L3 and L19. In the 70S ribosome, L14 and L19 interact and together make contacts with the 16S rRNA in bridges B5 and B8.

Its function is as follows. Binds to 23S rRNA. Forms part of two intersubunit bridges in the 70S ribosome. In Wolinella succinogenes (strain ATCC 29543 / DSM 1740 / CCUG 13145 / JCM 31913 / LMG 7466 / NCTC 11488 / FDC 602W) (Vibrio succinogenes), this protein is Large ribosomal subunit protein uL14.